The sequence spans 219 residues: ATP phosphoribosyltransferase (219 aa).

Belongs to the ATP phosphoribosyltransferase family. Short subfamily. As to quaternary structure, heteromultimer composed of HisG and HisZ subunits.

The protein resides in the cytoplasm. It carries out the reaction 1-(5-phospho-beta-D-ribosyl)-ATP + diphosphate = 5-phospho-alpha-D-ribose 1-diphosphate + ATP. It participates in amino-acid biosynthesis; L-histidine biosynthesis; L-histidine from 5-phospho-alpha-D-ribose 1-diphosphate: step 1/9. Its function is as follows. Catalyzes the condensation of ATP and 5-phosphoribose 1-diphosphate to form N'-(5'-phosphoribosyl)-ATP (PR-ATP). Has a crucial role in the pathway because the rate of histidine biosynthesis seems to be controlled primarily by regulation of HisG enzymatic activity. The chain is ATP phosphoribosyltransferase from Syntrophotalea carbinolica (strain DSM 2380 / NBRC 103641 / GraBd1) (Pelobacter carbinolicus).